The sequence spans 167 residues: Crossover junction endodeoxyribonuclease RuvC (167 aa).

Catalysis depends on residues Asp-8, Glu-68, and Asp-140. Residues Asp-8, Glu-68, and Asp-140 each coordinate Mg(2+).

This sequence belongs to the RuvC family. In terms of assembly, homodimer which binds Holliday junction (HJ) DNA. The HJ becomes 2-fold symmetrical on binding to RuvC with unstacked arms; it has a different conformation from HJ DNA in complex with RuvA. In the full resolvosome a probable DNA-RuvA(4)-RuvB(12)-RuvC(2) complex forms which resolves the HJ. Mg(2+) is required as a cofactor.

It is found in the cytoplasm. It catalyses the reaction Endonucleolytic cleavage at a junction such as a reciprocal single-stranded crossover between two homologous DNA duplexes (Holliday junction).. Its function is as follows. The RuvA-RuvB-RuvC complex processes Holliday junction (HJ) DNA during genetic recombination and DNA repair. Endonuclease that resolves HJ intermediates. Cleaves cruciform DNA by making single-stranded nicks across the HJ at symmetrical positions within the homologous arms, yielding a 5'-phosphate and a 3'-hydroxyl group; requires a central core of homology in the junction. The consensus cleavage sequence is 5'-(A/T)TT(C/G)-3'. Cleavage occurs on the 3'-side of the TT dinucleotide at the point of strand exchange. HJ branch migration catalyzed by RuvA-RuvB allows RuvC to scan DNA until it finds its consensus sequence, where it cleaves and resolves the cruciform DNA. This chain is Crossover junction endodeoxyribonuclease RuvC, found in Sinorhizobium medicae (strain WSM419) (Ensifer medicae).